Here is a 315-residue protein sequence, read N- to C-terminus: L-lactate dehydrogenase (315 aa).

NAD(+)-binding positions include Val17, Asp38, Lys43, Tyr69, and 83-84; that span reads GA. Substrate contacts are provided by Gln86 and Arg92. NAD(+) is bound by residues Ser105, 122 to 124, and Ser147; that span reads ATN. Position 124–127 (124–127) interacts with substrate; sequence NPVD. Residue 152-155 participates in substrate binding; it reads DTAR. The beta-D-fructose 1,6-bisphosphate site is built by Arg157 and His172. The active-site Proton acceptor is the His179. The residue at position 223 (Tyr223) is a Phosphotyrosine. Position 232 (Thr232) interacts with substrate.

Belongs to the LDH/MDH superfamily. LDH family. Homotetramer.

Its subcellular location is the cytoplasm. The enzyme catalyses (S)-lactate + NAD(+) = pyruvate + NADH + H(+). It participates in fermentation; pyruvate fermentation to lactate; (S)-lactate from pyruvate: step 1/1. Its activity is regulated as follows. Allosterically activated by fructose 1,6-bisphosphate (FBP). Catalyzes the conversion of lactate to pyruvate. The polypeptide is L-lactate dehydrogenase (Macrococcus caseolyticus (strain JCSC5402) (Macrococcoides caseolyticum)).